We begin with the raw amino-acid sequence, 64 residues long: Large ribosomal subunit protein uL30 (64 aa).

It belongs to the universal ribosomal protein uL30 family. In terms of assembly, part of the 50S ribosomal subunit.

This is Large ribosomal subunit protein uL30 from Syntrophus aciditrophicus (strain SB).